The chain runs to 422 residues: L-threonine dehydratase biosynthetic IlvA (422 aa).

N6-(pyridoxal phosphate)lysine is present on Lys56. Pyridoxal 5'-phosphate contacts are provided by residues Asn83, 189-193 (GGGGL), and Ser315. An ACT-like domain is found at 339 to 413 (HYFILNFPQR…FDKSNIYINE (75 aa)).

This sequence belongs to the serine/threonine dehydratase family. As to quaternary structure, homotetramer. Requires pyridoxal 5'-phosphate as cofactor.

It carries out the reaction L-threonine = 2-oxobutanoate + NH4(+). The protein operates within amino-acid biosynthesis; L-isoleucine biosynthesis; 2-oxobutanoate from L-threonine: step 1/1. Functionally, catalyzes the anaerobic formation of alpha-ketobutyrate and ammonia from threonine in a two-step reaction. The first step involved a dehydration of threonine and a production of enamine intermediates (aminocrotonate), which tautomerizes to its imine form (iminobutyrate). Both intermediates are unstable and short-lived. The second step is the nonenzymatic hydrolysis of the enamine/imine intermediates to form 2-ketobutyrate and free ammonia. In the low water environment of the cell, the second step is accelerated by RidA. In Staphylococcus saprophyticus subsp. saprophyticus (strain ATCC 15305 / DSM 20229 / NCIMB 8711 / NCTC 7292 / S-41), this protein is L-threonine dehydratase biosynthetic IlvA (ilvA).